Consider the following 485-residue polypeptide: Glutamate--tRNA ligase (485 aa).

The 'HIGH' region signature appears at 11–21 (PSPTGHLHIGN). Residues 252-256 (KLSKR) carry the 'KMSKS' region motif. Lysine 255 provides a ligand contact to ATP.

The protein belongs to the class-I aminoacyl-tRNA synthetase family. Glutamate--tRNA ligase type 1 subfamily. Monomer.

The protein localises to the cytoplasm. The catalysed reaction is tRNA(Glu) + L-glutamate + ATP = L-glutamyl-tRNA(Glu) + AMP + diphosphate. Functionally, catalyzes the attachment of glutamate to tRNA(Glu) in a two-step reaction: glutamate is first activated by ATP to form Glu-AMP and then transferred to the acceptor end of tRNA(Glu). This chain is Glutamate--tRNA ligase, found in Bacillus thuringiensis (strain Al Hakam).